A 431-amino-acid chain; its full sequence is 3-phosphoshikimate 1-carboxyvinyltransferase (431 aa).

Lysine 26, serine 27, and arginine 31 together coordinate 3-phosphoshikimate. Lysine 26 provides a ligand contact to phosphoenolpyruvate. Glycine 99 and arginine 127 together coordinate phosphoenolpyruvate. 3-phosphoshikimate is bound by residues serine 170, serine 171, glutamine 172, serine 199, glutamate 314, and histidine 343. Position 172 (glutamine 172) interacts with phosphoenolpyruvate. The Proton acceptor role is filled by glutamate 314. Phosphoenolpyruvate contacts are provided by arginine 347, arginine 388, and lysine 413.

This sequence belongs to the EPSP synthase family. As to quaternary structure, monomer.

The protein localises to the cytoplasm. It carries out the reaction 3-phosphoshikimate + phosphoenolpyruvate = 5-O-(1-carboxyvinyl)-3-phosphoshikimate + phosphate. It participates in metabolic intermediate biosynthesis; chorismate biosynthesis; chorismate from D-erythrose 4-phosphate and phosphoenolpyruvate: step 6/7. Catalyzes the transfer of the enolpyruvyl moiety of phosphoenolpyruvate (PEP) to the 5-hydroxyl of shikimate-3-phosphate (S3P) to produce enolpyruvyl shikimate-3-phosphate and inorganic phosphate. This chain is 3-phosphoshikimate 1-carboxyvinyltransferase, found in Mycobacterium ulcerans (strain Agy99).